Reading from the N-terminus, the 532-residue chain is Probable cytochrome c oxidase subunit 1 (532 aa).

The next 8 helical transmembrane spans lie at Ile33–Phe53, Val74–Gly94, Gly95–Leu115, Ile118–Gly138, Met163–Ile183, Pro200–Leu220, Leu252–Val272, and Ile284–Val304. Position 79 (His79) interacts with Fe(II)-heme a. Residues His258 and Tyr262 each coordinate Cu cation. The Cu cation site is built by His307 and His308. A run of 2 helical transmembrane segments spans residues Ala318 to Phe338 and Met355 to Leu375. A heme a3-binding site is contributed by His393. 3 consecutive transmembrane segments (helical) span residues Phe394–Phe414, Phe431–Ala451, and Ile473–Leu493. Position 395 (His395) interacts with Fe(II)-heme a.

The protein belongs to the heme-copper respiratory oxidase family.

The protein resides in the cell membrane. The enzyme catalyses 4 Fe(II)-[cytochrome c] + O2 + 8 H(+)(in) = 4 Fe(III)-[cytochrome c] + 2 H2O + 4 H(+)(out). The protein operates within energy metabolism; oxidative phosphorylation. Its function is as follows. Cytochrome c oxidase is the component of the respiratory chain that catalyzes the reduction of oxygen to water. Subunits 1-3 form the functional core of the enzyme complex. CO I is the catalytic subunit of the enzyme. Electrons originating in cytochrome c are transferred via the copper A center of subunit 2 and heme A of subunit 1 to the bimetallic center formed by heme A3 and copper B. The chain is Probable cytochrome c oxidase subunit 1 (ctaD) from Rickettsia bellii (strain RML369-C).